The following is a 201-amino-acid chain: Small ribosomal subunit protein uS4c (201 aa).

Residues 15-44 (LGALPGLTSKRPRSGSDLRNQSRSGKKSQY) are disordered. The S4 RNA-binding domain maps to 89-150 (MRLDNILFRL…EQRSRALIQN (62 aa)).

The protein belongs to the universal ribosomal protein uS4 family. As to quaternary structure, part of the 30S ribosomal subunit. Contacts protein S5. The interaction surface between S4 and S5 is involved in control of translational fidelity.

The protein localises to the plastid. Its subcellular location is the chloroplast. Functionally, one of the primary rRNA binding proteins, it binds directly to 16S rRNA where it nucleates assembly of the body of the 30S subunit. In terms of biological role, with S5 and S12 plays an important role in translational accuracy. This Calycanthus floridus var. glaucus (Eastern sweetshrub) protein is Small ribosomal subunit protein uS4c (rps4).